A 211-amino-acid chain; its full sequence is Histidine biosynthesis bifunctional protein HisIE (211 aa).

A phosphoribosyl-AMP cyclohydrolase region spans residues Met1 to Phe117. Positions Leu118 to Lys211 are phosphoribosyl-ATP pyrophosphohydrolase.

In the N-terminal section; belongs to the PRA-CH family. The protein in the C-terminal section; belongs to the PRA-PH family.

The protein resides in the cytoplasm. The enzyme catalyses 1-(5-phospho-beta-D-ribosyl)-ATP + H2O = 1-(5-phospho-beta-D-ribosyl)-5'-AMP + diphosphate + H(+). The catalysed reaction is 1-(5-phospho-beta-D-ribosyl)-5'-AMP + H2O = 1-(5-phospho-beta-D-ribosyl)-5-[(5-phospho-beta-D-ribosylamino)methylideneamino]imidazole-4-carboxamide. Its pathway is amino-acid biosynthesis; L-histidine biosynthesis; L-histidine from 5-phospho-alpha-D-ribose 1-diphosphate: step 2/9. It participates in amino-acid biosynthesis; L-histidine biosynthesis; L-histidine from 5-phospho-alpha-D-ribose 1-diphosphate: step 3/9. In Shewanella oneidensis (strain ATCC 700550 / JCM 31522 / CIP 106686 / LMG 19005 / NCIMB 14063 / MR-1), this protein is Histidine biosynthesis bifunctional protein HisIE.